The following is a 152-amino-acid chain: Large ribosomal subunit protein bL9 (152 aa).

The protein belongs to the bacterial ribosomal protein bL9 family.

Functionally, binds to the 23S rRNA. The polypeptide is Large ribosomal subunit protein bL9 (Coxiella burnetii (strain Dugway 5J108-111)).